A 269-amino-acid polypeptide reads, in one-letter code: Activator of basal transcription 1 (269 aa).

The segment at methionine 1–lysine 40 is disordered. The stretch at glycine 5–glutamate 29 forms a coiled coil. A compositionally biased stretch (acidic residues) spans glutamate 16–aspartate 32. Residues glycine 48–leucine 145 enclose the RRM domain. A coiled-coil region spans residues alanine 164–glutamine 194. Residues glutamate 220–aspartate 244 are disordered.

Belongs to the ESF2/ABP1 family. In terms of assembly, interacts with ESF1/ABTAP. Interacts with IGHMBP2. As to expression, ubiquitously expressed.

Its subcellular location is the nucleus. The protein resides in the nucleolus. Functionally, could be a novel TATA-binding protein (TBP) which can function as a basal transcription activator. Can act as a regulator of basal transcription for class II genes. The polypeptide is Activator of basal transcription 1 (Abt1) (Mus musculus (Mouse)).